The sequence spans 1204 residues: Bromodomain and PHD finger-containing protein 3 (1204 aa).

2 disordered regions span residues 1 to 27 (MRKPRRKSRQNAEGRRSPSPYSLKCSP) and 76 to 127 (SNKE…TGSQ). Basic residues predominate over residues 89–99 (KSKKPSSKGKR). Residues 212–262 (DAFCCVCLDDECHNSNVILFCDICNLAVHQECYGVPYIPEGQWLCRCCLQS) form a PHD-type 1 zinc finger. The C2HC pre-PHD-type zinc-finger motif lies at 266–299 (PVDCVLCPNKGGAFKQTSDGHWAHVVCAIWIPEV). The PHD-type 2 zinc-finger motif lies at 323–387 (LTCYICKQKG…RKTAYCEAHS (65 aa)). Residues 393 to 464 (ARRKGDSPRS…KKEPEEAGRE (72 aa)) form a disordered region. Phosphoserine is present on residues Ser399 and Ser402. The segment covering 417–429 (GEEEQEEAEEEGQ) has biased composition (acidic residues). The segment covering 442–454 (VSKKGKMSLKQKI) has biased composition (basic residues). Lys445, Lys447, and Lys670 each carry N6-acetyllysine. One can recognise a Bromo domain in the interval 588–692 (LELMPFTVLL…DLGGAILRHA (105 aa)). 2 positions are modified to phosphoserine: Ser712 and Ser739. Residues 778-879 (RQKLAQPPPP…FLKSRKVEDE (102 aa)) are disordered. Residues 816 to 826 (QQEEPEEEGDR) show a composition bias toward acidic residues. Phosphoserine is present on residues Ser899, Ser961, and Ser964. The segment at 903–1015 (IDRLSLTNPD…ESGSDSECSL (113 aa)) is disordered. A compositionally biased stretch (basic and acidic residues) spans 979-990 (SCSDSEGERSPQ). Residues 1075–1158 (PLELVWAKCR…RDKVLPLGVE (84 aa)) form the PWWP domain.

Component of some HBO1 complexes composed of KAT7/HBO1, MEAF6, ING4 or ING5, and BRPF3. Component of the MOZ/MORF complex composed at least of ING5, KAT6A, KAT6B, MEAF6 and one of BRPF1, BRD1/BRPF2 and BRPF3. Interacts with KAT7/HBO1; the interaction is direct. In terms of tissue distribution, highly expressed in the adult testis and brain.

The protein localises to the nucleus. In terms of biological role, scaffold subunit of various histone acetyltransferase (HAT) complexes, such as the MOZ/MORF and HBO1 complexes, which have a histone H3 acetyltransferase activity. Plays a role in DNA replication initiation by directing KAT7/HBO1 specificity towards histone H3 'Lys-14' acetylation (H3K14ac), thereby facilitating the activation of replication origins. Component of the MOZ/MORF complex which has a histone H3 acetyltransferase activity. This is Bromodomain and PHD finger-containing protein 3 from Mus musculus (Mouse).